Consider the following 261-residue polypeptide: Cytochrome c oxidase subunit 3 (261 aa).

Residues 1–15 (MTHQTHAYHMVNPSP) are Mitochondrial matrix-facing. A helical transmembrane segment spans residues 16–34 (WPLTGALSALLMTSGLAMW). The Mitochondrial intermembrane portion of the chain corresponds to 35–40 (FHFNST). A helical transmembrane segment spans residues 41-66 (LLLAMGLLTNILTMYQWWRDIIREST). The Mitochondrial matrix segment spans residues 67–72 (FQGHHT). The chain crosses the membrane as a helical span at residues 73–105 (SIVQKGLRYGMILFIISEVFFFSGFFWAFYHSS). Residues 106–128 (LAPTPELGGCWPPTGIHPLNPLE) are Mitochondrial intermembrane-facing. The chain crosses the membrane as a helical span at residues 129–152 (VPLLNTSVLLASGVSITWAHHSLM). Residues 153–155 (EGN) are Mitochondrial matrix-facing. Residues 156–183 (RKNMLQGLFITISLGVYFTLLQASEYYE) traverse the membrane as a helical segment. Topologically, residues 184–190 (ASFTISD) are mitochondrial intermembrane. A helical membrane pass occupies residues 191–223 (GVYGSTFFVATGFHGLHVIIGSTFLIVCFLRQL). Topologically, residues 224–232 (KFHFTSSHH) are mitochondrial matrix. Residues 233 to 256 (FGFEAAAWYWHFVDVVWLFLYVSI) traverse the membrane as a helical segment. Topologically, residues 257–261 (YWWGS) are mitochondrial intermembrane.

Belongs to the cytochrome c oxidase subunit 3 family. In terms of assembly, component of the cytochrome c oxidase (complex IV, CIV), a multisubunit enzyme composed of 14 subunits. The complex is composed of a catalytic core of 3 subunits MT-CO1, MT-CO2 and MT-CO3, encoded in the mitochondrial DNA, and 11 supernumerary subunits COX4I, COX5A, COX5B, COX6A, COX6B, COX6C, COX7A, COX7B, COX7C, COX8 and NDUFA4, which are encoded in the nuclear genome. The complex exists as a monomer or a dimer and forms supercomplexes (SCs) in the inner mitochondrial membrane with NADH-ubiquinone oxidoreductase (complex I, CI) and ubiquinol-cytochrome c oxidoreductase (cytochrome b-c1 complex, complex III, CIII), resulting in different assemblies (supercomplex SCI(1)III(2)IV(1) and megacomplex MCI(2)III(2)IV(2)).

It is found in the mitochondrion inner membrane. It catalyses the reaction 4 Fe(II)-[cytochrome c] + O2 + 8 H(+)(in) = 4 Fe(III)-[cytochrome c] + 2 H2O + 4 H(+)(out). Component of the cytochrome c oxidase, the last enzyme in the mitochondrial electron transport chain which drives oxidative phosphorylation. The respiratory chain contains 3 multisubunit complexes succinate dehydrogenase (complex II, CII), ubiquinol-cytochrome c oxidoreductase (cytochrome b-c1 complex, complex III, CIII) and cytochrome c oxidase (complex IV, CIV), that cooperate to transfer electrons derived from NADH and succinate to molecular oxygen, creating an electrochemical gradient over the inner membrane that drives transmembrane transport and the ATP synthase. Cytochrome c oxidase is the component of the respiratory chain that catalyzes the reduction of oxygen to water. Electrons originating from reduced cytochrome c in the intermembrane space (IMS) are transferred via the dinuclear copper A center (CU(A)) of subunit 2 and heme A of subunit 1 to the active site in subunit 1, a binuclear center (BNC) formed by heme A3 and copper B (CU(B)). The BNC reduces molecular oxygen to 2 water molecules using 4 electrons from cytochrome c in the IMS and 4 protons from the mitochondrial matrix. In Equus caballus (Horse), this protein is Cytochrome c oxidase subunit 3 (MT-CO3).